The sequence spans 190 residues: Orotate phosphoribosyltransferase (190 aa).

114–122 (EDVVTTGGS) lines the 5-phospho-alpha-D-ribose 1-diphosphate pocket. Orotate contacts are provided by threonine 118 and arginine 146.

The protein belongs to the purine/pyrimidine phosphoribosyltransferase family. PyrE subfamily. As to quaternary structure, homodimer. Requires Mg(2+) as cofactor.

The catalysed reaction is orotidine 5'-phosphate + diphosphate = orotate + 5-phospho-alpha-D-ribose 1-diphosphate. Its pathway is pyrimidine metabolism; UMP biosynthesis via de novo pathway; UMP from orotate: step 1/2. Functionally, catalyzes the transfer of a ribosyl phosphate group from 5-phosphoribose 1-diphosphate to orotate, leading to the formation of orotidine monophosphate (OMP). The chain is Orotate phosphoribosyltransferase from Thermoanaerobacter sp. (strain X514).